Here is a 183-residue protein sequence, read N- to C-terminus: Microfibrillar-associated protein 2 (183 aa).

Positions 1 to 16 (MRAACLFLLFMPGLLA) form a signal peptide, or 18. Pyrrolidone carboxylic acid is present on Gln-17. Sulfotyrosine is present on residues Tyr-46, Tyr-47, and Tyr-49. The tract at residues 52–92 (VSPRTPEEQFQSQQQVQQEVIPAPTPEPAAAGDLETEPTEP) is disordered. The span at 59–70 (EQFQSQQQVQQE) shows a compositional bias: low complexity. The 31-residue stretch at 153-183 (CRDKFSKCGVMAVSGLCQSVAASCARSCGGC) folds into the ShKT domain. Cystine bridges form between Cys-153/Cys-183, Cys-160/Cys-176, and Cys-169/Cys-180.

This sequence belongs to the MFAP family. In terms of assembly, forms a ternary complex with BGN and ELN. Interacts with FBN1 (via N-terminal domain) and FBN2. Forms intermolecular disulfide bonds either with other MAGP-1 molecules or with other components of the microfibrils. May form transglutaminase cross-links. Post-translationally, O-glycosylated.

Its subcellular location is the secreted. The protein resides in the extracellular space. It localises to the extracellular matrix. In terms of biological role, component of the elastin-associated microfibrils. This is Microfibrillar-associated protein 2 (Mfap2) from Mus musculus (Mouse).